The chain runs to 314 residues: Acetyl-coenzyme A carboxylase carboxyl transferase subunit beta, chloroplastic (314 aa).

The 268-residue stretch at 47 to 314 (LWTRCDNCEN…APWKEKNNQV (268 aa)) folds into the CoA carboxyltransferase N-terminal domain. The Zn(2+) site is built by Cys-51, Cys-54, Cys-70, and Cys-73. The segment at 51–73 (CDNCENMLYIKFLKQNKGVCEEC) adopts a C4-type zinc-finger fold.

Belongs to the AccD/PCCB family. Acetyl-CoA carboxylase is a heterohexamer composed of biotin carboxyl carrier protein, biotin carboxylase and 2 subunits each of ACCase subunit alpha and ACCase plastid-coded subunit beta (accD). The cofactor is Zn(2+).

It is found in the plastid. The protein localises to the chloroplast stroma. It carries out the reaction N(6)-carboxybiotinyl-L-lysyl-[protein] + acetyl-CoA = N(6)-biotinyl-L-lysyl-[protein] + malonyl-CoA. It participates in lipid metabolism; malonyl-CoA biosynthesis; malonyl-CoA from acetyl-CoA: step 1/1. Component of the acetyl coenzyme A carboxylase (ACC) complex. Biotin carboxylase (BC) catalyzes the carboxylation of biotin on its carrier protein (BCCP) and then the CO(2) group is transferred by the transcarboxylase to acetyl-CoA to form malonyl-CoA. This Angiopteris lygodiifolia (Turnip fern) protein is Acetyl-coenzyme A carboxylase carboxyl transferase subunit beta, chloroplastic.